Consider the following 219-residue polypeptide: Maleylacetoacetate isomerase (219 aa).

The GST N-terminal domain maps to 4 to 87 (NKTVLYSYWR…YLEETHPENP (84 aa)). Glutathione is bound by residues 14–19 (SSCSWR), Gln-45, 71–72 (QS), Gln-111, and 115–117 (NLK). Residues 92–217 (GSYERAIARQ…LPQNQPDAEP (126 aa)) enclose the GST C-terminal domain.

The protein belongs to the GST superfamily. Zeta family. It depends on glutathione as a cofactor.

The catalysed reaction is 4-maleylacetoacetate = 4-fumarylacetoacetate. The protein operates within amino-acid degradation; L-phenylalanine degradation; acetoacetate and fumarate from L-phenylalanine: step 5/6. In Dictyostelium discoideum (Social amoeba), this protein is Maleylacetoacetate isomerase (mai).